The sequence spans 449 residues: UDP-glycosyltransferase 76E7 (449 aa).

UDP-alpha-D-glucose-binding positions include serine 275, alanine 333–glutamine 335, histidine 350–glutamate 358, and threonine 372–glutamine 375.

It belongs to the UDP-glycosyltransferase family.

This Arabidopsis thaliana (Mouse-ear cress) protein is UDP-glycosyltransferase 76E7 (UGT76E7).